The chain runs to 353 residues: UPF0283 membrane protein YcjF (353 aa).

A run of 3 helical transmembrane segments spans residues 70 to 90, 100 to 120, and 213 to 233; these read MVMGGLALFGASVVGQGVQWT, VALGGCAAGALIVGAGVGSVV, and ESTLMIAVSPLALVDMAFIAW.

The protein belongs to the UPF0283 family.

It localises to the cell inner membrane. The polypeptide is UPF0283 membrane protein YcjF (Salmonella schwarzengrund (strain CVM19633)).